A 171-amino-acid chain; its full sequence is Cytochrome c-type biogenesis protein CcmE (171 aa).

Over 1–7 the chain is Cytoplasmic; the sequence is MNRKQKR. A helical; Signal-anchor for type II membrane protein transmembrane segment spans residues 8–28; sequence LAVIAGGMGFIAAAVLLVMFA. The Periplasmic segment spans residues 29 to 171; that stretch reads FSQSVAYFYM…NPGEEAKATQ (143 aa). Positions 124 and 128 each coordinate heme. Positions 132–171 are disordered; it reads DVADRLKQQGLWKEGQGGQESPGKEGQGQENPGEEAKATQ.

It belongs to the CcmE/CycJ family.

The protein localises to the cell inner membrane. Functionally, heme chaperone required for the biogenesis of c-type cytochromes. Transiently binds heme delivered by CcmC and transfers the heme to apo-cytochromes in a process facilitated by CcmF and CcmH. This Rhizobium leguminosarum bv. trifolii (strain WSM2304) protein is Cytochrome c-type biogenesis protein CcmE.